The primary structure comprises 546 residues: Chaperonin GroEL 1 (546 aa).

ATP is bound by residues 30 to 33 (TLGP), Lys51, 87 to 91 (DGTTT), Gly415, 479 to 481 (NAA), and Asp495. The disordered stretch occupies residues 526–546 (KEDAPMPGGMPGGMGGMGMDM). The segment covering 534-546 (GMPGGMGGMGMDM) has biased composition (gly residues).

The protein belongs to the chaperonin (HSP60) family. In terms of assembly, forms a cylinder of 14 subunits composed of two heptameric rings stacked back-to-back. Interacts with the co-chaperonin GroES.

The protein resides in the cytoplasm. The enzyme catalyses ATP + H2O + a folded polypeptide = ADP + phosphate + an unfolded polypeptide.. In terms of biological role, together with its co-chaperonin GroES, plays an essential role in assisting protein folding. The GroEL-GroES system forms a nano-cage that allows encapsulation of the non-native substrate proteins and provides a physical environment optimized to promote and accelerate protein folding. This chain is Chaperonin GroEL 1, found in Burkholderia pseudomallei (strain K96243).